The sequence spans 98 residues: Beta-2-microglobulin (98 aa).

In terms of domain architecture, Ig-like C1-type spans 4–92 (PKVQVYSRFP…HETLKEPQVY (89 aa)). A disulfide bridge links cysteine 24 with cysteine 79.

The protein belongs to the beta-2-microglobulin family. In terms of assembly, heterodimer of an alpha chain and a beta chain. Beta-2-microglobulin is the beta-chain of major histocompatibility complex class I molecules.

It localises to the secreted. Functionally, component of the class I major histocompatibility complex (MHC). Involved in the presentation of peptide antigens to the immune system. The protein is Beta-2-microglobulin (B2M) of Meleagris gallopavo (Wild turkey).